The sequence spans 415 residues: Multidrug resistance protein MdtA (415 aa).

Positions 1–21 (MKGSYKSRWVIVIVVVIAAIA) are cleaved as a signal peptide. Disordered regions lie at residues 32-60 (SRSA…GPLA) and 392-415 (EAQS…GARS). The segment covering 399–415 (PEEKATSREYAKKGARS) has biased composition (basic and acidic residues).

Belongs to the membrane fusion protein (MFP) (TC 8.A.1) family. As to quaternary structure, part of a tripartite efflux system composed of MdtA, MdtB and MdtC.

It localises to the cell inner membrane. Its function is as follows. The MdtABC tripartite complex confers resistance against novobiocin and deoxycholate. The chain is Multidrug resistance protein MdtA from Escherichia coli O81 (strain ED1a).